Reading from the N-terminus, the 323-residue chain is Prostaglandin-E(2) 9-reductase (323 aa).

NADP(+)-binding positions include 23-24 and Asp-50; that span reads TY. A substrate-binding site is contributed by Tyr-24. Tyr-55 (proton donor) is an active-site residue. His-117 serves as a coordination point for substrate. NADP(+) contacts are provided by residues 166 to 167, Gln-190, 216 to 221, and 270 to 280; these read SN, YSALGS, and KSFTEKRIKEN.

The protein belongs to the aldo/keto reductase family.

The protein resides in the cytoplasm. It catalyses the reaction prostaglandin F2alpha + NADP(+) = prostaglandin E2 + NADPH + H(+). The catalysed reaction is (17R,20S)-17,20-dihydroxypregn-4-en-3-one + NADP(+) = 17alpha-hydroxyprogesterone + NADPH + H(+). It carries out the reaction (17R,20S)-17,20-dihydroxypregn-4-en-3-one + NAD(+) = 17alpha-hydroxyprogesterone + NADH + H(+). Can convert prostaglandin E2 to prostaglandin F2-alpha. The sequence is that of Prostaglandin-E(2) 9-reductase (AKR1C5) from Oryctolagus cuniculus (Rabbit).